Here is a 1523-residue protein sequence, read N- to C-terminus: MADGVTLVDSTGLHSFSSSPSLSTSSSSLTAVALSLATSASAVTASYSISHLPPPPLPPVPTTMAGWIGWVFSFFFQVIPSVLYWVITFSTITLPTWLFTLFSMSLTFTMNFTTLLLIVLAMVSTISWFIRYRFLNMYSRLPPEPQRKEPQVDLFPDVQEGDSKPGLANYLDEFLSAIKVFGYLERPVFHELTRTMQTRKLIAGETLMLEEEKGFCLVVDGLVQIFVKSMRDGKSDTDEELHHLGAESSDEEHHIDGKQGYQLLTEVKNGASMSSLFSILSLFTEDIQLRENESSGSSSSSIALRAARVPNSIPTSPRGVMDSPSLGFQDHSDDTSNMITNGDLPSVPPLHLGESHTPPSGDQHHQQHHESRKHSSRKRRKSVHPDIVARAMVDTTIAIIPASAFRRLTRVYPRATAHIVQVILTRLQRVTFATAHSYLGLSNEVLGIEKQMTKFTTYDLPNNMRGAALDRLKDKFIKERDRLGSEEVTKGIALHNPSAGRRRRSSSFLRKDAALQVKMMTPRRAATVVTPESAPAEHDTYGVSPGDLLSTIQSSRFGPRYEQPPAKLQSPLAEKENTHFRLPAMQARHTFRRQDTMDEDALFRECILDCIMKGIGLTSSTRDALRKSSHSGDASPKLLSYDSRRQKAIFTNNAFGFIDPYEGSGDGETESLMSMSVTSAGGTSPVINLREELRNDIEIVYFPKGSVLVEQGERHPGLYYVIDGFLDVGVPIVEKGEDLVGVSKPAASKESFPTLKRTTTANSIGAGGTAANDSRRRKQSRKSLYLIKPGGIQGYVGAVASYRSYTDVVAKTDVYVGFLPRASLERIAERYPIALLTLAKRLTSILPRLLLHIDFALEWLQVNAGQVIYHQGDESDAIYLVLNGRLRSVLESPGNKLAVIGEYGQGESVGELEVMTESTRPATLHAIRDTELAKFPRSLFNSLAQEHPGITIQVSKLIAQRMRDLVERPVTEKGVERSNAGGVQTATSTVNLRTVGILPVTAGVPVVEFGNRLLHALHQVGVTNGVTSLNQAAILNHLGRHAFSKMGKLKLSQYLADLEEKYGMVLYIADTNVSSPWTQTCITQADCILLVGLAESSPSIGEYERFLLGMKTTARKELVLLHSERYCPPGLTRRWLKNRVWINGGHHHIQMAFRLTAEPSHPETKRFGTVLKQRVQVLQAEIQKYTSRRIRQTPLYSAQSPFKGDFHRLARRLCGRAVGLVLGGGGARGIAHVGVIKALEEAGIPVDIIGGTSIGSFIGALYARDADVVPMYGRAKKFAGRMGSMWRFALDLTYPTVSYTTGHEFNRGIFKTFGDSQIEDFWLEFYCNTTNISKSRPEYHSSGYVWRYVRASMSLAGLIPPICDEGSMLLDGGYIDNLTVDHMKGLGADVIFAVDVGSIDDNTPQVYGDSLSGFWSVFNRWNPFSSCPNPPTLSEIQARLAYVSSIDNLERAKNIPGCLYMRPPIDGYGTLEFGKFDEIYQVGYAFGKQFLEKLKTEGSLPLPEETEEKKKLQRTMAPRRASI.

At 1–66 (MADGVTLVDS…LPPVPTTMAG (66 aa)) the chain is on the cytoplasmic side. A helical transmembrane segment spans residues 67–87 (WIGWVFSFFFQVIPSVLYWVI). Residues 88-109 (TFSTITLPTWLFTLFSMSLTFT) lie on the Lumenal side of the membrane. Residues 110–130 (MNFTTLLLIVLAMVSTISWFI) form a helical membrane-spanning segment. Residues 131–1523 (RYRFLNMYSR…RTMAPRRASI (1393 aa)) are Cytoplasmic-facing. Disordered stretches follow at residues 309–384 (VPNS…KSVH) and 524–545 (RAAT…GVSP). Residues 370–382 (ESRKHSSRKRRKS) show a composition bias toward basic residues. Residues 681-800 (GGTS…GAVA) and 841-961 (RLTS…IAQR) each bind a nucleoside 3',5'-cyclic phosphate. The PNPLA domain occupies 1220–1384 (LVLGGGGARG…IDNLTVDHMK (165 aa)). The GXGXXG signature appears at 1224 to 1229 (GGGARG). The short motif at 1251–1255 (GTSIG) is the GXSXG element. Ser1253 functions as the Nucleophile in the catalytic mechanism. Asp1371 functions as the Proton acceptor in the catalytic mechanism. Residues 1371–1373 (DGG) carry the DGA/G motif. Residues 1502–1523 (LPEETEEKKKLQRTMAPRRASI) are disordered.

This sequence belongs to the NTE family.

The protein localises to the endoplasmic reticulum membrane. The enzyme catalyses a 1-acyl-sn-glycero-3-phosphocholine + H2O = sn-glycerol 3-phosphocholine + a fatty acid + H(+). Inhibited by organophosphorus esters. Intracellular phospholipase B that catalyzes the double deacylation of phosphatidylcholine (PC) to glycerophosphocholine (GroPCho). Plays an important role in membrane lipid homeostasis. Responsible for the rapid PC turnover in response to inositol, elevated temperatures, or when choline is present in the growth medium. This chain is Lysophospholipase nte1 (nte1), found in Neosartorya fischeri (strain ATCC 1020 / DSM 3700 / CBS 544.65 / FGSC A1164 / JCM 1740 / NRRL 181 / WB 181) (Aspergillus fischerianus).